Here is a 460-residue protein sequence, read N- to C-terminus: UDP-N-acetylmuramoylalanine--D-glutamate ligase (460 aa).

115–121 (GTDGKTT) lines the ATP pocket.

It belongs to the MurCDEF family.

It is found in the cytoplasm. The catalysed reaction is UDP-N-acetyl-alpha-D-muramoyl-L-alanine + D-glutamate + ATP = UDP-N-acetyl-alpha-D-muramoyl-L-alanyl-D-glutamate + ADP + phosphate + H(+). It participates in cell wall biogenesis; peptidoglycan biosynthesis. Cell wall formation. Catalyzes the addition of glutamate to the nucleotide precursor UDP-N-acetylmuramoyl-L-alanine (UMA). The protein is UDP-N-acetylmuramoylalanine--D-glutamate ligase of Chlorobium luteolum (strain DSM 273 / BCRC 81028 / 2530) (Pelodictyon luteolum).